Reading from the N-terminus, the 282-residue chain is Bifunctional protein FolD 1 (282 aa).

Residues 167–169 (GRS) and serine 192 contribute to the NADP(+) site.

Belongs to the tetrahydrofolate dehydrogenase/cyclohydrolase family. Homodimer.

The catalysed reaction is (6R)-5,10-methylene-5,6,7,8-tetrahydrofolate + NADP(+) = (6R)-5,10-methenyltetrahydrofolate + NADPH. It carries out the reaction (6R)-5,10-methenyltetrahydrofolate + H2O = (6R)-10-formyltetrahydrofolate + H(+). The protein operates within one-carbon metabolism; tetrahydrofolate interconversion. Catalyzes the oxidation of 5,10-methylenetetrahydrofolate to 5,10-methenyltetrahydrofolate and then the hydrolysis of 5,10-methenyltetrahydrofolate to 10-formyltetrahydrofolate. The protein is Bifunctional protein FolD 1 of Colwellia psychrerythraea (strain 34H / ATCC BAA-681) (Vibrio psychroerythus).